A 1081-amino-acid chain; its full sequence is uncharacterized protein (1081 aa).

Coiled-coil stretches lie at residues Ala18–Asn131 and Asn173–Lys242. Over residues Asn22–Met53 the composition is skewed to basic and acidic residues. The segment at Asn22 to Lys60 is disordered. Disordered regions lie at residues Thr250–Ile321 and Gln388–Glu1081. Positions Thr267–Thr283 are enriched in pro residues. Composition is skewed to low complexity over residues Pro284 to Thr313 and Asn396 to Asp410. Residues Asp411–Asn421 show a composition bias toward basic and acidic residues. Composition is skewed to low complexity over residues Asn422–Glu568, Asn576–Asn602, Gly614–Asn623, Asp633–Asn644, Gly662–Asn672, and Gln680–Asp733. Composition is skewed to acidic residues over residues Gly748–Asp768, Asn778–Asn832, and Gln840–Asn854. Low complexity-rich tracts occupy residues Asn855 to Asn869 and Asn877 to Glu888. The segment covering Asn889–Glu954 has biased composition (acidic residues). Composition is skewed to low complexity over residues Asn955 to Glu975, Glu983 to Glu1026, and Gly1034 to Glu1081.

This is an uncharacterized protein from Dictyostelium discoideum (Social amoeba).